The following is a 243-amino-acid chain: 1-(5-phosphoribosyl)-5-[(5-phosphoribosylamino)methylideneamino] imidazole-4-carboxamide isomerase (243 aa).

The active-site Proton acceptor is aspartate 10. Catalysis depends on aspartate 129, which acts as the Proton donor.

Belongs to the HisA/HisF family.

The protein resides in the cytoplasm. It carries out the reaction 1-(5-phospho-beta-D-ribosyl)-5-[(5-phospho-beta-D-ribosylamino)methylideneamino]imidazole-4-carboxamide = 5-[(5-phospho-1-deoxy-D-ribulos-1-ylimino)methylamino]-1-(5-phospho-beta-D-ribosyl)imidazole-4-carboxamide. It functions in the pathway amino-acid biosynthesis; L-histidine biosynthesis; L-histidine from 5-phospho-alpha-D-ribose 1-diphosphate: step 4/9. In Saccharopolyspora erythraea (strain ATCC 11635 / DSM 40517 / JCM 4748 / NBRC 13426 / NCIMB 8594 / NRRL 2338), this protein is 1-(5-phosphoribosyl)-5-[(5-phosphoribosylamino)methylideneamino] imidazole-4-carboxamide isomerase.